The sequence spans 37 residues: Cytochrome b6-f complex subunit 5 (37 aa).

Residues 5–25 (LLCGIVLGLIPITLAGLFVAA) traverse the membrane as a helical segment.

The protein belongs to the PetG family. The 4 large subunits of the cytochrome b6-f complex are cytochrome b6, subunit IV (17 kDa polypeptide, PetD), cytochrome f and the Rieske protein, while the 4 small subunits are PetG, PetL, PetM and PetN. The complex functions as a dimer.

The protein resides in the cellular thylakoid membrane. Functionally, component of the cytochrome b6-f complex, which mediates electron transfer between photosystem II (PSII) and photosystem I (PSI), cyclic electron flow around PSI, and state transitions. PetG is required for either the stability or assembly of the cytochrome b6-f complex. This chain is Cytochrome b6-f complex subunit 5, found in Cyanothece sp. (strain PCC 7425 / ATCC 29141).